A 2084-amino-acid polypeptide reads, in one-letter code: MAP kinase-activating death domain protein (2084 aa).

The region spanning 25-352 (TPPMPKGLQG…VPVPGSTRVE (328 aa)) is the uDENN domain. A disordered region spans residues 117 to 253 (PSSAAGSAGA…SPRASRKRTK (137 aa)). A compositionally biased stretch (low complexity) spans 118–131 (SSAAGSAGAGNDRP). Gly residues predominate over residues 132 to 152 (GNGGPGGHGGGAGGGAGGGGR). Residues 160 to 173 (FRRESWRKSMERSS) are compositionally biased toward basic and acidic residues. Residues 174-183 (DSAFSSDYRS) are compositionally biased toward low complexity. Over residues 189 to 204 (DSDRELTSRRDSDQQR) the composition is skewed to basic and acidic residues. Residues 205 to 215 (LHSHHSHHQPH) are compositionally biased toward basic residues. Residues 234 to 245 (DSESGGSHSPSP) show a composition bias toward polar residues. Residues 373–514 (RFSLVDFPLH…EGTILKNHLK (142 aa)) enclose the cDENN domain. In terms of domain architecture, dDENN spans 516–678 (ALTSMTATNT…EWSLTPTNVA (163 aa)). Disordered regions lie at residues 557 to 588 (TPPH…NSPA), 730 to 749 (QPTD…SSSY), 811 to 863 (VASK…TVGS), 891 to 963 (QESD…SQSS), 1058 to 1092 (HSAG…GNNF), 1115 to 1188 (FGKK…AENQ), and 1305 to 1382 (SSSL…GQST). Residues 558–588 (PPHSAQASQRNSMSAQGTISSRQPSPMNSPA) are compositionally biased toward polar residues. The span at 824–839 (SPVSSSSSRSDLSSPS) shows a compositional bias: low complexity. Over residues 913 to 925 (HPSDSESRPEKKI) the composition is skewed to basic and acidic residues. The span at 946–963 (GSSGSSSSSPGRQSSQSS) shows a compositional bias: low complexity. Positions 1121-1131 (QKQVPVQQKQP) are enriched in low complexity. Basic and acidic residues predominate over residues 1168 to 1183 (TQEELTRQQNQERSHS). A compositionally biased stretch (low complexity) spans 1305 to 1315 (SSSLLSSHAAS). Polar residues-rich tracts occupy residues 1324 to 1353 (RSPS…STQL) and 1370 to 1382 (RLSS…GQST). Residues 1490-1565 (GMDQGPIEMM…GLVYSQEVHN (76 aa)) form the Death domain. The segment covering 1794–1842 (DIHAQQKQKHQQQQQHQQPQQQQQPHQTTTQQNQPTAVASAVPTTTAPA) has biased composition (low complexity). 2 disordered regions span residues 1794-1865 (DIHA…RHTV) and 1896-2084 (VPVP…HRKH). Positions 1845-1858 (VNPNRMTAKSQAGS) are enriched in polar residues. Residues 1896-1907 (VPVPPTPAPPTS) show a composition bias toward pro residues. The span at 1921–1932 (SQPSTESLASIS) shows a compositional bias: polar residues. Pro residues-rich tracts occupy residues 1933 to 1953 (SPPP…PAIP) and 1983 to 1993 (QYTPQPPPPFV). Composition is skewed to low complexity over residues 2001–2029 (LARA…HSQS) and 2059–2077 (ISGS…ASAS).

This sequence belongs to the MADD family.

The protein localises to the cell membrane. It is found in the cytoplasm. Functionally, guanyl-nucleotide exchange factor that regulates small GTPases. Converts GDP-bound inactive form of Rab3 to the GTP-bound active forms. The polypeptide is MAP kinase-activating death domain protein (Drosophila melanogaster (Fruit fly)).